The following is a 255-amino-acid chain: Uridylate kinase (255 aa).

Residue 22-25 (KLSG) participates in ATP binding. Positions 30-35 (GNGGYG) are involved in allosteric activation by GTP. Position 64 (G64) interacts with UMP. ATP is bound by residues G65 and R69. Residues D85 and 146–153 (TGNPFFTT) contribute to the UMP site. Residues N174, Y180, and D183 each contribute to the ATP site.

Belongs to the UMP kinase family. In terms of assembly, homohexamer.

It is found in the cytoplasm. It carries out the reaction UMP + ATP = UDP + ADP. It participates in pyrimidine metabolism; CTP biosynthesis via de novo pathway; UDP from UMP (UMPK route): step 1/1. With respect to regulation, allosterically activated by GTP. Inhibited by UTP. In terms of biological role, catalyzes the reversible phosphorylation of UMP to UDP. The polypeptide is Uridylate kinase (Rubrobacter xylanophilus (strain DSM 9941 / JCM 11954 / NBRC 16129 / PRD-1)).